We begin with the raw amino-acid sequence, 131 residues long: Small ribosomal subunit protein uS8 (131 aa).

This sequence belongs to the universal ribosomal protein uS8 family. As to quaternary structure, part of the 30S ribosomal subunit. Contacts proteins S5 and S12.

In terms of biological role, one of the primary rRNA binding proteins, it binds directly to 16S rRNA central domain where it helps coordinate assembly of the platform of the 30S subunit. In Burkholderia multivorans (strain ATCC 17616 / 249), this protein is Small ribosomal subunit protein uS8.